A 921-amino-acid chain; its full sequence is Protein translocase subunit SecA (921 aa).

ATP is bound by residues glutamine 87, 105–109, and aspartate 501; that span reads GEGKT. The segment at 831-886 is disordered; sequence PFPVINTETSGPSEEPAGLFSQGTTGGDIPAPQPMAGFPSAAPMPPRPQPVPTGAE. A compositionally biased stretch (pro residues) spans 872–881; the sequence is APMPPRPQPV. Zn(2+)-binding residues include cysteine 905, cysteine 907, cysteine 916, and histidine 917.

The protein belongs to the SecA family. As to quaternary structure, monomer and homodimer. Part of the essential Sec protein translocation apparatus which comprises SecA, SecYEG and auxiliary proteins SecDF-YajC and YidC. Requires Zn(2+) as cofactor.

Its subcellular location is the cell inner membrane. It localises to the cytoplasm. The catalysed reaction is ATP + H2O + cellular proteinSide 1 = ADP + phosphate + cellular proteinSide 2.. Its function is as follows. Part of the Sec protein translocase complex. Interacts with the SecYEG preprotein conducting channel. Has a central role in coupling the hydrolysis of ATP to the transfer of proteins into and across the cell membrane, serving both as a receptor for the preprotein-SecB complex and as an ATP-driven molecular motor driving the stepwise translocation of polypeptide chains across the membrane. The protein is Protein translocase subunit SecA of Gluconobacter oxydans (strain 621H) (Gluconobacter suboxydans).